A 143-amino-acid polypeptide reads, in one-letter code: Fluoride-specific ion channel FluC 1 (143 aa).

The next 4 helical transmembrane spans lie at 13–33 (VLVG…SVIA), 42–62 (GVPW…ATLL), 80–100 (LCIG…TVEA), and 111–131 (WGIA…WVVI). G88 and T91 together coordinate Na(+).

Belongs to the fluoride channel Fluc/FEX (TC 1.A.43) family.

The protein resides in the cell membrane. The catalysed reaction is fluoride(in) = fluoride(out). With respect to regulation, na(+) is not transported, but it plays an essential structural role and its presence is essential for fluoride channel function. Its function is as follows. Fluoride-specific ion channel. Important for reducing fluoride concentration in the cell, thus reducing its toxicity. The polypeptide is Fluoride-specific ion channel FluC 1 (Cutibacterium acnes (strain DSM 16379 / KPA171202) (Propionibacterium acnes)).